Consider the following 448-residue polypeptide: Vacuolar amino acid transporter 6 (448 aa).

The Cytoplasmic segment spans residues 1-7 (MVASIRS). Residues 8-28 (GVLTLLHTACGAGILAMPYAF) form a helical membrane-spanning segment. At 29 to 32 (KPFG) the chain is on the vacuolar side. A helical transmembrane segment spans residues 33–53 (LIPGVIMIVLCGACAMQSLFI). Topologically, residues 54 to 80 (QARVAKYVPQGRASFSALTRLINPNLG) are cytoplasmic. Residues 81-101 (IVFDLAIAIKCFGVGVSYMIV) traverse the membrane as a helical segment. The Vacuolar segment spans residues 102 to 125 (VGDLMPQIMSVWTRNAWLLNRNVQ). A helical membrane pass occupies residues 126 to 146 (ISLIMLFFVAPLSFLKKLNSL). Over 147-150 (RYAS) the chain is Cytoplasmic. A helical transmembrane segment spans residues 151 to 171 (MVAISSVAYLCVLVLLHYVAP). Residues 172–195 (SDEILRLKGRISYLLPPQSHDLNV) lie on the Vacuolar side of the membrane. A helical transmembrane segment spans residues 196-216 (LNTLPIFVFAYTCHHNMFSII). The Cytoplasmic segment spans residues 217–229 (NEQRSSRFEHVMK). Residues 230-250 (IPLIAISLALILYIAIGCAGY) form a helical membrane-spanning segment. At 251–267 (LTFGDNIIGNIIMLYPQ) the chain is on the vacuolar side. The chain crosses the membrane as a helical span at residues 268–288 (AVSSTIGRIAIVLLVMLAFPL). The Cytoplasmic segment spans residues 289-357 (QCHPARASIH…PKETPLRGKS (69 aa)). Position 344 is a phosphoserine (Ser-344). A helical membrane pass occupies residues 358–378 (FIVITCSILVASYLVAISVSS). Topologically, residues 379-381 (LAR) are vacuolar. A helical membrane pass occupies residues 382–402 (VLAIVGATGSTSISFILPGLF). Over 403 to 424 (GYKLIGTEHKTAVPLTTKIFKY) the chain is Cytoplasmic. The helical transmembrane segment at 425–445 (TGLLLFIWGLIIMITCLTAAL) threads the bilayer. Topologically, residues 446 to 448 (KLN) are vacuolar.

This sequence belongs to the amino acid/polyamine transporter 2 family.

It is found in the vacuole membrane. In terms of biological role, involved in amino acid efflux from the vacuole to the cytoplasm. Capable of transporting aspartate and glutamate. Requires ATP for function. The polypeptide is Vacuolar amino acid transporter 6 (AVT6) (Saccharomyces cerevisiae (strain ATCC 204508 / S288c) (Baker's yeast)).